The following is a 275-amino-acid chain: MTRKIAIYGKGGIGKSTTQQNTAAAMAHFYDKKVFIHGCDPKADSTRLILGGMPQKTLMDMLRDEGEEKITTENIVRVGYEDIRCVESGGPEPGVGCAGRGVITAIDLMEKNGAYTEDLDFVFFDVLGDVVCGGFAMPIRDGKAQEVYIVASGEMMAVYAANNICKGLVKYANQSGVRLGGIICNSRMVDLEREFIEEFAASIGTQMIHFMPRDNIVQKAEFNKQTVIEFDDTCNQAKEYGELARKIIENEMFVIPTPLKMDDLEAMVVKYGMTD.

9-16 (GKGGIGKS) serves as a coordination point for ATP. Position 97 (cysteine 97) interacts with [4Fe-4S] cluster. Arginine 100 carries the ADP-ribosylarginine; by dinitrogenase reductase ADP-ribosyltransferase modification. Cysteine 132 lines the [4Fe-4S] cluster pocket.

This sequence belongs to the NifH/BchL/ChlL family. In terms of assembly, homodimer. The cofactor is [4Fe-4S] cluster. Post-translationally, the reversible ADP-ribosylation of Arg-100 inactivates the nitrogenase reductase and regulates nitrogenase activity.

It carries out the reaction N2 + 8 reduced [2Fe-2S]-[ferredoxin] + 16 ATP + 16 H2O = H2 + 8 oxidized [2Fe-2S]-[ferredoxin] + 2 NH4(+) + 16 ADP + 16 phosphate + 6 H(+). Its function is as follows. The key enzymatic reactions in nitrogen fixation are catalyzed by the nitrogenase complex, which has 2 components: the iron protein and the molybdenum-iron protein. The chain is Nitrogenase iron protein 3 (nifH3) from Clostridium pasteurianum.